Consider the following 366-residue polypeptide: Lysophosphatidic acid receptor 1-B (366 aa).

Residues 1 to 52 are Extracellular-facing; the sequence is MTSLSEFVSEPIGMMSQTSAASESQCYYNETIAFFYNRSGKYLDTEWNAVSK. Cystine bridges form between Cys26–Cys192 and Cys190–Cys197. Residues Asn29 and Asn37 are each glycosylated (N-linked (GlcNAc...) asparagine). Residue Lys41 coordinates a 1-acyl-sn-glycero-3-phosphate. A helical transmembrane segment spans residues 53 to 77; sequence LVMGLGITVCIFIMLANLLVMVAIY. The Cytoplasmic portion of the chain corresponds to 78-85; the sequence is VNRRFHFP. A helical transmembrane segment spans residues 86 to 109; the sequence is IYYLMANLAAADFFAGLAYFYLMF. Topologically, residues 110–123 are extracellular; it reads NTGPNTRRLTVSTW. A helical transmembrane segment spans residues 124–146; sequence LLRQGLIDTSLTASVANLLAIAI. Position 126–131 (126–131) interacts with a 1-acyl-sn-glycero-3-phosphate; sequence RQGLID. Over 147-165 the chain is Cytoplasmic; sequence ERHITVFRMQLHTRMSNRR. A helical transmembrane segment spans residues 166 to 186; that stretch reads VVVVIVVIWTVAIVMGAIPSV. At 187 to 206 the chain is on the extracellular side; the sequence is GWNCICDLEHCSNMAPLYSD. A helical membrane pass occupies residues 207 to 227; that stretch reads SYLIFWTIFNLVTFVVMVVLY. Trp212 contacts a 1-acyl-sn-glycero-3-phosphate. Over 228–257 the chain is Cytoplasmic; the sequence is AHIFVYVRQRTMRMSRHSSGPRRNRDTMMS. Residues 258 to 282 traverse the membrane as a helical segment; it reads LLKTVVIVLGAFIVCWTPGLVLLLL. Residues 283-296 are Extracellular-facing; that stretch reads DVCCPQCNILAYEK. Cys286 and Cys289 are joined by a disulfide. The helical transmembrane segment at 297–317 threads the bilayer; it reads FFLLLAEFNSAMNPIIYSYRD. The Cytoplasmic segment spans residues 318–366; the sequence is KEMSATFKQILCCQRTENVNGPTEGSDRSASSLNHTILAGVHSNDHSVV.

Belongs to the G-protein coupled receptor 1 family. Expressed at high levels in oocytes and at lower levels in brain and spinal cord. Below detection level in lung, heart, kidney, liver, muscle, stomach, and intestine.

It localises to the cell surface. The protein localises to the cell membrane. It is found in the endosome. Functionally, receptor for lysophosphatidic acid (LPA). Plays a role in the reorganization of the actin cytoskeleton, cell migration, differentiation and proliferation, and thereby contributes to the responses to tissue damage and infectious agents. Activates downstream signaling cascades via the G(i)/G(o), G(12)/G(13), and G(q) families of heteromeric G proteins. Signaling inhibits adenylyl cyclase activity and decreases cellular cAMP levels. Signaling triggers an increase of cytoplasmic Ca(2+) levels. Signaling leads to the activation of phospholipase C (PLC) and the formation of inositol 1,4,5-trisphosphate. Signaling mediates activation of down-stream MAP kinases. Contributes to the regulation of cell shape. Promotes Rho-dependent reorganization of the actin cytoskeleton in neuronal cells and neurite retraction. Promotes the activation of Rho and the formation of actin stress fibers. Promotes formation of lamellipodia at the leading edge of migrating cells via activation of Rac. Through its function as lysophosphatidic acid receptor, plays a role in chemotaxis and cell migration, including responses to injury and wounding. Promotes cell proliferation in response to lysophosphatidic acid. In Xenopus laevis (African clawed frog), this protein is Lysophosphatidic acid receptor 1-B (lpar1-b).